Here is a 408-residue protein sequence, read N- to C-terminus: L,D-transpeptidase 2 (408 aa).

Residues 1–34 (MPKVGIAAQAGRTRVRRAWLTALMMTAVMIGAVA) form the signal peptide. A lipid anchor (N-palmitoyl cysteine) is attached at Cys-35. Cys-35 carries S-diacylglycerol cysteine lipidation. Asp-232, Glu-235, and Gly-236 together coordinate Ca(2+). Residues 253–378 (VIATADDNTK…VKRGDIVEVV (126 aa)) enclose the L,D-TPase catalytic domain. Substrate-binding positions include Tyr-318 and 331–332 (SG). His-336 serves as the catalytic Proton donor/acceptor. Cys-354 (nucleophile) is an active-site residue. A substrate-binding site is contributed by Asn-356.

Monomer.

The protein localises to the cell membrane. It functions in the pathway cell wall biogenesis; peptidoglycan biosynthesis. Its activity is regulated as follows. Is irreversibly inactivated by the beta-lactams carbapenems via the formation of a covalent adduct resulting from acylation of the catalytic Cys. Its function is as follows. Generates 3-&gt;3 cross-links in peptidoglycan, catalyzing the cleavage of the mDap(3)-D-Ala(4) bond of a tetrapeptide donor stem and the formation of a bond between the carbonyl of mDap(3) of the donor stem and the side chain of mDap(3) of the acceptor stem. Is specific for donor substrates containing a stem tetrapeptide since it cannot use pentapeptide stems. Is essential for virulence in a mouse model of acute infection. In Mycobacterium tuberculosis (strain CDC 1551 / Oshkosh), this protein is L,D-transpeptidase 2 (ldtB).